Consider the following 543-residue polypeptide: Mitochondrial distribution and morphology protein 34 (543 aa).

The 202-residue stretch at 1–202 (MSFNVNWNSL…LPTLLHKVSL (202 aa)) folds into the SMP-LTD domain. The interval 519–543 (AFSHNDPSITPFELPPPPYHQLSRA) is disordered.

The protein belongs to the MDM34 family. As to quaternary structure, component of the ER-mitochondria encounter structure (ERMES) or MDM complex, composed of MMM1, MDM10, MDM12 and MDM34.

It localises to the mitochondrion outer membrane. Its function is as follows. Component of the ERMES/MDM complex, which serves as a molecular tether to connect the endoplasmic reticulum (ER) and mitochondria. Components of this complex are involved in the control of mitochondrial shape and protein biogenesis, and function in nonvesicular lipid trafficking between the ER and mitochondria. MDM34 is required for the interaction of the ER-resident membrane protein MMM1 and the outer mitochondrial membrane-resident beta-barrel protein MDM10. In Clavispora lusitaniae (strain ATCC 42720) (Yeast), this protein is Mitochondrial distribution and morphology protein 34.